Consider the following 509-residue polypeptide: Bestrophin-2a (509 aa).

At 1-31 (MTVTYTARVANARFGGFSQLLLLWRGSIYKL) the chain is on the cytoplasmic side. Residue Ala-10 coordinates Ca(2+). A helical membrane pass occupies residues 32 to 51 (LWRELLCFLGFYMALSAAYR). At 52–60 (FVLTEGQKR) the chain is on the extracellular side. Residues 61–82 (YFEKLVIYCDQYASLIPVSFVL) traverse the membrane as a helical segment. The Cytoplasmic segment spans residues 83–238 (GFYVTLVVNR…WISVPLVYTQ (156 aa)). The helical transmembrane segment at 239-255 (VVTIALYSYFLACLIGR) threads the bilayer. Residues 256 to 274 (QFLDPAQGYKDHDLDLCVP) are Extracellular-facing. The helical transmembrane segment at 275–288 (IFTLLQFFFYAGWL) threads the bilayer. Residues 289-509 (KVAEQLINPF…PIGEEEENLA (221 aa)) lie on the Cytoplasmic side of the membrane. The Ca(2+) site is built by Gln-293, Asn-296, Asp-301, and Asp-304. The disordered stretch occupies residues 454–509 (DPGLPEPEAPPPAGPEPLTLIPGPVEPFSIVTMPGPRGPAPPWLPSPIGEEEENLA). Pro residues-rich tracts occupy residues 457–468 (LPEPEAPPPAGP) and 489–498 (PRGPAPPWLP).

This sequence belongs to the anion channel-forming bestrophin (TC 1.A.46) family. Calcium-sensitive chloride channel subfamily. As to quaternary structure, pentamer. Interacts with GLUL; this interaction tethers a fraction of GLUL to the membrane, causing a decrease of cytosolic glutamine synthase (GS) activity and inhibits the chloride channel activity of BEST2 by affecting the gating at the aperture in the absence of intracellular glutamate. As to expression, mainly confined to the retinal pigment epithelium. Expressed in colon.

The protein resides in the cell membrane. It localises to the basolateral cell membrane. The catalysed reaction is chloride(in) = chloride(out). The enzyme catalyses hydrogencarbonate(in) = hydrogencarbonate(out). It catalyses the reaction L-glutamate(out) = L-glutamate(in). It carries out the reaction iodide(out) = iodide(in). The catalysed reaction is L-glutamine(out) = L-glutamine(in). With respect to regulation, chloride channel activity is allosterically inhibited by GLUL/glutamine synthase (GS) which affects the gating at the aperture in the absence of intracellular glutamate. Inhibitory effect of GLUL is relieved upon increasing of L-glutamate intracellular level. Ligand-gated anion channel that allows the movement of anions across cell membranes when activated by calcium (Ca2+). Transports a large specter of anions, namely mediates the movement of chloride, L-glutamate and iodide. Calcium-binding triggers the dilation of the aperture, but calcium-dependent gating is only effective when the size of the passing anion is bigger than the closed aperture. Mediates the calcium-activated hydrogencarbonate movement and participates in colonic hydrogencarbonate secretion concomitant with mucin secretion. In non-pigmented epithelium (NPE), mediates the efflux of intracellular L-glutamate; binding of intracellular L-glutamate activates and open both the neck and the aperture of the channel, leading to L-glutamate exit promoting chloride influx movement from the extracellular side in trans. Also exhibits a directional permeability for intracellular glutamine, in a similar manner as for L-glutamate. This chain is Bestrophin-2a, found in Homo sapiens (Human).